A 328-amino-acid chain; its full sequence is MSTSSINGFSLSSLSPAKTSTKRTTLRPFVSASLNTSSSSSSSTFPSLIQDKPVFASSSPIITPVLREEMGKGYDEAIEELQKLLREKTELKATAAEKVEQITAQLGTTSSSDGIPKSEASERIKTGFLHFKKEKYDKNPALYGELAKGQSPPFMVFACSDSRVCPSHVLDFQPGEAFVVRNVANLVPPYDQAKYAGTGAAIEYAVLHLKVSNIVVIGHSACGGIKGLLSFPFDGTYSTDFIEEWVKIGLPAKAKVKAQHGDAPFAELCTHCEKEAVNASLGNLLTYPFVREGLVNKTLALKGGYYDFVKGSFELWGLEFGLSSTFSV.

A compositionally biased stretch (low complexity) spans 1-15; that stretch reads MSTSSINGFSLSSLS. The tract at residues 1-26 is disordered; sequence MSTSSINGFSLSSLSPAKTSTKRTTL. The N-terminal 70 residues, 1 to 70, are a transit peptide targeting the chloroplast; sequence MSTSSINGFS…IITPVLREEM (70 aa).

This sequence belongs to the beta-class carbonic anhydrase family. In terms of assembly, homohexamer.

The protein resides in the plastid. It is found in the chloroplast stroma. It catalyses the reaction hydrogencarbonate + H(+) = CO2 + H2O. Its function is as follows. Reversible hydration of carbon dioxide. The sequence is that of Carbonic anhydrase, chloroplastic from Pisum sativum (Garden pea).